The following is a 214-amino-acid chain: Osteoclast-stimulating factor 1 (214 aa).

Position 2 is an N-acetylserine (Ser2). One can recognise an SH3 domain in the interval 12-71; sequence GQVKVFRALYTFEPRTPDELYFEEGDIIYITDMSDTSWWKGTCKGRTGLIPSNYVAEQAE. 3 ANK repeats span residues 72–101, 105–135, and 139–168; these read SIDN…GVNG, AGST…ELNQ, and LGDT…RTDL. Position 200 is a phosphothreonine (Thr200). Phosphoserine occurs at positions 202 and 213.

As to quaternary structure, interacts with SRC and SMN1. Interacts with FASLG.

It is found in the cytoplasm. Induces bone resorption, acting probably through a signaling cascade which results in the secretion of factor(s) enhancing osteoclast formation and activity. The sequence is that of Osteoclast-stimulating factor 1 (Ostf1) from Rattus norvegicus (Rat).